The following is a 128-amino-acid chain: Large ribosomal subunit protein bL19 (128 aa).

Belongs to the bacterial ribosomal protein bL19 family.

In terms of biological role, this protein is located at the 30S-50S ribosomal subunit interface and may play a role in the structure and function of the aminoacyl-tRNA binding site. The protein is Large ribosomal subunit protein bL19 of Herminiimonas arsenicoxydans.